The sequence spans 86 residues: Small ribosomal subunit protein bS20 (86 aa).

It belongs to the bacterial ribosomal protein bS20 family.

In terms of biological role, binds directly to 16S ribosomal RNA. The protein is Small ribosomal subunit protein bS20 of Kineococcus radiotolerans (strain ATCC BAA-149 / DSM 14245 / SRS30216).